The following is a 552-amino-acid chain: Methyl-coenzyme M reductase II subunit alpha (552 aa).

Gln150 lines the coenzyme F430 pocket. Residues Arg228, 259 to 260 (KH), and Arg273 each bind coenzyme B. Residues Tyr335 and Tyr446 each coordinate coenzyme M.

The protein belongs to the methyl-coenzyme M reductase alpha subunit family. As to quaternary structure, MCR is a hexamer of two alpha, two beta, and two gamma chains, forming a dimer of heterotrimers. Coenzyme F430 is required as a cofactor.

The catalysed reaction is coenzyme B + methyl-coenzyme M = methane + coenzyme M-coenzyme B heterodisulfide. Its pathway is one-carbon metabolism; methyl-coenzyme M reduction; methane from methyl-coenzyme M: step 1/1. Functionally, component of the methyl-coenzyme M reductase (MCR) I that catalyzes the reductive cleavage of methyl-coenzyme M (CoM-S-CH3 or 2-(methylthio)ethanesulfonate) using coenzyme B (CoB or 7-mercaptoheptanoylthreonine phosphate) as reductant which results in the production of methane and the mixed heterodisulfide of CoB and CoM (CoM-S-S-CoB). This is the final step in methanogenesis. This is Methyl-coenzyme M reductase II subunit alpha (mrtA) from Methanocaldococcus jannaschii (strain ATCC 43067 / DSM 2661 / JAL-1 / JCM 10045 / NBRC 100440) (Methanococcus jannaschii).